The primary structure comprises 146 residues: Meiotically up-regulated gene 151 protein (146 aa).

The tract at residues 1–40 is disordered; it reads MSLVAYDSEEEEQTSLVNENNDIKGRSEEPHWKIPNSPKA. Residues 21 to 32 are compositionally biased toward basic and acidic residues; it reads NDIKGRSEEPHW.

It is found in the nucleus. In terms of biological role, has a role in meiosis. This is Meiotically up-regulated gene 151 protein (mug151) from Schizosaccharomyces pombe (strain 972 / ATCC 24843) (Fission yeast).